Here is a 461-residue protein sequence, read N- to C-terminus: MKKILVIGDLIADYYLWGKSERLSPEAPVPVLEVQRESKNLGGAANVANNLISLKAKVFLCGVVGDDLEGEHFISALKARGIDASGILIDKTRCTTLKTRIIAQNQQIARVDKEIKDPLNADLRKKLLDFFTEKIQEIDGVILSDYNKGVLDFELTQAMIALANQHHKLILCDPKGKDYSKYSHASLITPNRTELEHALHLKLDSHANLSKALQILKETYHIAMPLVTLSEQGIAFLEKGELVNCPTIAKEVYDVTGAGDTVIASLTLSLLESMSLKDACEFANAAAAVVVGKMGSALASLEEIALILNQTHPKILSLEKLLETLDQQKIIFTNGCFDLLHKGHASYLQKAKALGDILIVGLNSDASIKRLKGDKRPIVSEKDRAFLLASLSCVDYVVVFEEDTPIKLIQALKPDILVKGADYLNKEVIGSEFAKETHLMEFEEGYSTSAIIEKIKRTCND.

The interval 1 to 315 (MKKILVIGDL…LILNQTHPKI (315 aa)) is ribokinase. 191–194 (NRTE) lines the ATP pocket. The active site involves Asp-260. The tract at residues 332 to 461 (FTNGCFDLLH…IEKIKRTCND (130 aa)) is cytidylyltransferase.

It in the N-terminal section; belongs to the carbohydrate kinase PfkB family. The protein in the C-terminal section; belongs to the cytidylyltransferase family. As to quaternary structure, homodimer.

The catalysed reaction is D-glycero-beta-D-manno-heptose 7-phosphate + ATP = D-glycero-beta-D-manno-heptose 1,7-bisphosphate + ADP + H(+). It carries out the reaction D-glycero-beta-D-manno-heptose 1-phosphate + ATP + H(+) = ADP-D-glycero-beta-D-manno-heptose + diphosphate. It functions in the pathway nucleotide-sugar biosynthesis; ADP-L-glycero-beta-D-manno-heptose biosynthesis; ADP-L-glycero-beta-D-manno-heptose from D-glycero-beta-D-manno-heptose 7-phosphate: step 1/4. Its pathway is nucleotide-sugar biosynthesis; ADP-L-glycero-beta-D-manno-heptose biosynthesis; ADP-L-glycero-beta-D-manno-heptose from D-glycero-beta-D-manno-heptose 7-phosphate: step 3/4. It participates in bacterial outer membrane biogenesis; LPS core biosynthesis. Functionally, catalyzes the phosphorylation of D-glycero-D-manno-heptose 7-phosphate at the C-1 position to selectively form D-glycero-beta-D-manno-heptose-1,7-bisphosphate. Its function is as follows. Catalyzes the ADP transfer from ATP to D-glycero-beta-D-manno-heptose 1-phosphate, yielding ADP-D-glycero-beta-D-manno-heptose. The chain is Bifunctional protein HldE from Helicobacter pylori (strain ATCC 700392 / 26695) (Campylobacter pylori).